We begin with the raw amino-acid sequence, 239 residues long: Non-structural protein V (239 aa).

2 disordered regions span residues 30–104 (PVET…ADEA) and 126–180 (NKSS…HRRE). Over residues 65–74 (TPDRQDRSDK) the composition is skewed to basic and acidic residues. Polar residues-rich tracts occupy residues 89-98 (PATSTDQPPT) and 143-153 (ASSTSDSTAGE). Histidine 177, cysteine 196, cysteine 200, cysteine 212, cysteine 214, cysteine 217, cysteine 221, and cysteine 224 together coordinate Zn(2+).

In terms of assembly, interacts with host STAT1. Interacts with host TXNL1. Interacts (via C-terminus) with host CacyBP; this interaction inhibits host cell apoptosis.

Its subcellular location is the host cytoplasm. The protein resides in the host nucleus. Its function is as follows. Protects the virus against cell antiviral state by blocking host interferon signaling. Mechanistically, targets host phosphorylated STAT1 (phospho-STAT1) for degradation, thereby inhibiting the interferon alpha signaling pathway. Plays a role in the inhibition of host apoptosis. Interacts with and down-regulates the expression of host TXNL1. In turn, inhibits TXNL1-induced apoptosis through the BCL2-BAX-caspase 3 pathway. Inhibits host apoptosis also by negatively regulating host CacyBP/SIP. Promotes viral replication by activating the extracellular signal-regulated kinase (ERK) pathway. The sequence is that of Non-structural protein V (P/V) from Gallus gallus (Chicken).